The chain runs to 705 residues: Putative membrane protein SCO6666 (705 aa).

13 helical membrane-spanning segments follow: residues 16 to 36 (VMLL…GVFG), 144 to 164 (LHGI…PLLG), 177 to 197 (NAEL…FGGL), 201 to 221 (GLPL…LFGF), 232 to 252 (IQVT…LMLV), 280 to 300 (LFSG…PSTF), 306 to 326 (LAVA…LPAL), 360 to 380 (VAVL…VTGM), 504 to 524 (ALTV…SVLL), 528 to 548 (TVAT…WVFQ), 561 to 581 (LGAL…GLAM), 615 to 635 (VVTC…TGGF), and 636 to 656 (SPIL…ATVV).

It belongs to the resistance-nodulation-cell division (RND) (TC 2.A.6) family. MmpL subfamily.

It is found in the cell membrane. The sequence is that of Putative membrane protein SCO6666 from Streptomyces coelicolor (strain ATCC BAA-471 / A3(2) / M145).